The following is a 441-amino-acid chain: RNA-binding protein BRN1 (441 aa).

RRM domains follow at residues 18–99 and 106–186; these read VKLF…YADG and HKLF…WADT. Positions 258–273 are enriched in polar residues; sequence QPNQGNNNALQGTSPD. Residues 258 to 282 form a disordered region; it reads QPNQGNNNALQGTSPDSVPPRLARR. Positions 349-427 constitute an RRM 3 domain; sequence ANLFIYNIPR…KKLKVQLKRD (79 aa).

As to expression, highly expressed in stems and cauline leaves, and at lower levels in siliques, flowers, roots and rosette leaves.

It is found in the cytoplasm. Its function is as follows. RNA-binding protein involved in the regulation of flowering time. Acts as a repressor of the activity of SOC1, a transcriptional activator of flowering time. Binds to the 3'-UTR of SOC1 mRNA in the cytoplasm and participates in SOC1 mRNA decay, mediated by the distal region of the SOC1 3'-UTR. Acts as a positive regulator of salicylic acid (SA)-mediated immunity. May act on SA signaling-related genes at a post-transcriptional level. The protein is RNA-binding protein BRN1 of Arabidopsis thaliana (Mouse-ear cress).